A 286-amino-acid chain; its full sequence is Tryptophan 2,3-dioxygenase (286 aa).

Substrate contacts are provided by residues 53 to 57 (FIVQH), Y115, and R119. Heme is bound at residue H242. T256 lines the substrate pocket.

It belongs to the tryptophan 2,3-dioxygenase family. As to quaternary structure, homotetramer. It depends on heme as a cofactor.

The enzyme catalyses L-tryptophan + O2 = N-formyl-L-kynurenine. It participates in amino-acid degradation; L-tryptophan degradation via kynurenine pathway; L-kynurenine from L-tryptophan: step 1/2. Functionally, heme-dependent dioxygenase that catalyzes the oxidative cleavage of the L-tryptophan (L-Trp) pyrrole ring and converts L-tryptophan to N-formyl-L-kynurenine. Catalyzes the oxidative cleavage of the indole moiety. This chain is Tryptophan 2,3-dioxygenase, found in Kineococcus radiotolerans (strain ATCC BAA-149 / DSM 14245 / SRS30216).